The sequence spans 399 residues: MAQRAFPNPYADYNKSLAENYFDSTGRLTPEFSHRLTNKIRELLQQMERGLKSADPQDGTGYTGWAGIAVLYLHLHNVFGDPAYLQMAHSYVKHSLNCLSRRSITFLCGDAGPLAVAAVLYHKMNSGKQAEDCITRLIHLNKIDPHVPNEMLYGRIGYIFALLFVNKNFGEEKIPQSHIQQICETILTSGEKLSRKRNFTTKSPLMYEWYQEYYVGAAHGLAGIYYYLMQPSLHVSQGKLHSLVKPSVDFVCQLKFPSGNYPSCLDDTRDLLVHWCHGAPGVIYMLIQAYKVFKEEHYLCDAQQCADVIWQYGLLKKGYGLCHGAAGNAYAFLALYNLTQDAKYLYRACKFAEWCLDYGEHGCRTPDTPFSLFEGMAGTIYFLADLLVPTKAKFPAFEL.

Ala-2 carries the N-acetylalanine modification. Lys-142 bears the N6-acetyllysine mark. Zn(2+) is bound at residue Cys-276. Lys-317 provides a ligand contact to glutathione. Zn(2+)-binding residues include Cys-322 and His-323. Residue 364–367 (RTPD) participates in glutathione binding.

The protein belongs to the LanC-like protein family. As to quaternary structure, interacts with the C-terminal of STOM. Interacts with the EPS8 SH3 domain. Interaction with EPS8 is inhibited by glutathione binding. As to expression, strongly expressed in the brain, testis and skeletal muscle. Expressed in the neurons of the cerebellum, the germinal cells of the seminiferous tubules in testis, in liver hepoatocytes and in cardiac myocytes.

The protein resides in the cytoplasm. It is found in the cell membrane. The enzyme catalyses RX + glutathione = an S-substituted glutathione + a halide anion + H(+). The catalysed reaction is 1-chloro-2,4-dinitrobenzene + glutathione = 2,4-dinitrophenyl-S-glutathione + chloride + H(+). Its function is as follows. Functions as a glutathione transferase. Catalyzes conjugation of the glutathione (GSH) to artificial substrates 1-chloro-2,4-dinitrobenzene (CDNB) and p-nitrophenyl acetate. Mitigates neuronal oxidative stress during normal postnatal development and in response to oxidative stresses probably through GSH antioxidant defense mechanism. May play a role in EPS8 signaling. Binds glutathione. In Rattus norvegicus (Rat), this protein is Glutathione S-transferase LANCL1.